A 557-amino-acid polypeptide reads, in one-letter code: Dihydroxy-acid dehydratase (557 aa).

Position 49 (cysteine 49) interacts with [2Fe-2S] cluster. Aspartate 81 serves as a coordination point for Mg(2+). Cysteine 122 is a [2Fe-2S] cluster binding site. Residues aspartate 123 and lysine 124 each coordinate Mg(2+). An N6-carboxylysine modification is found at lysine 124. Cysteine 194 contributes to the [2Fe-2S] cluster binding site. Residue glutamate 446 participates in Mg(2+) binding. Serine 472 functions as the Proton acceptor in the catalytic mechanism.

It belongs to the IlvD/Edd family. As to quaternary structure, homodimer. [2Fe-2S] cluster serves as cofactor. It depends on Mg(2+) as a cofactor.

It catalyses the reaction (2R)-2,3-dihydroxy-3-methylbutanoate = 3-methyl-2-oxobutanoate + H2O. The catalysed reaction is (2R,3R)-2,3-dihydroxy-3-methylpentanoate = (S)-3-methyl-2-oxopentanoate + H2O. It functions in the pathway amino-acid biosynthesis; L-isoleucine biosynthesis; L-isoleucine from 2-oxobutanoate: step 3/4. Its pathway is amino-acid biosynthesis; L-valine biosynthesis; L-valine from pyruvate: step 3/4. In terms of biological role, functions in the biosynthesis of branched-chain amino acids. Catalyzes the dehydration of (2R,3R)-2,3-dihydroxy-3-methylpentanoate (2,3-dihydroxy-3-methylvalerate) into 2-oxo-3-methylpentanoate (2-oxo-3-methylvalerate) and of (2R)-2,3-dihydroxy-3-methylbutanoate (2,3-dihydroxyisovalerate) into 2-oxo-3-methylbutanoate (2-oxoisovalerate), the penultimate precursor to L-isoleucine and L-valine, respectively. The sequence is that of Dihydroxy-acid dehydratase from Prochlorococcus marinus (strain MIT 9301).